A 675-amino-acid polypeptide reads, in one-letter code: Cytoplasmic tyrosine-protein kinase BMX (675 aa).

Positions 4 to 111 constitute a PH domain; it reads KSILEELLLK…WLKALQKEIR (108 aa). The Btk-type zinc finger occupies 113 to 149; that stretch reads NPHLLVKYHSGFFVDGKFLCCQQSCKAAPGCTLWEAY. The Zn(2+) site is built by H121, C132, C133, and C143. Residues Y216 and Y224 each carry the phosphotyrosine; by autocatalysis modification. Residues 296–392 enclose the SH2 domain; that stretch reads WFAGNISRSQ…GMITRLRHPV (97 aa). Residues 417–675 form the Protein kinase domain; the sequence is ITLLKELGSG…IEPLREKDKH (259 aa). Residues 423 to 431 and K445 each bind ATP; that span reads LGSGQFGVV. Catalysis depends on D536, which acts as the Proton acceptor. Y566 is subject to Phosphotyrosine; by SRC and autocatalysis. The CAV1-binding motif lies at 596–603; the sequence is WAFGILMW.

The protein belongs to the protein kinase superfamily. Tyr protein kinase family. TEC subfamily. In terms of assembly, interacts with BCAR1, CAV1, MYD88, PTK2/FAK1, RUFY1, RUFY2, STAT3, TIRAP and TNFRSF1B. It depends on Zn(2+) as a cofactor. Post-translationally, phosphorylated in response to protein I/II and to LPS. Phosphorylation at Tyr-566 by SRC and by autocatalysis leads to activation and is required for STAT3 phosphorylation by BMX. In terms of tissue distribution, highly expressed in cells with great migratory potential, including endothelial cells and metastatic carcinoma cell lines.

The protein resides in the cytoplasm. It carries out the reaction L-tyrosyl-[protein] + ATP = O-phospho-L-tyrosyl-[protein] + ADP + H(+). With respect to regulation, TEK and vascular endothelial growth factor receptor 1 (FLT1) stimulate BMX tyrosine kinase activity. Activated by integrins through the mediation of PTK2/FAK1. Activated by TNF through the mediation of TNFRSF1B. Non-receptor tyrosine kinase that plays central but diverse modulatory roles in various signaling processes involved in the regulation of actin reorganization, cell migration, cell proliferation and survival, cell adhesion, and apoptosis. Participates in signal transduction stimulated by growth factor receptors, cytokine receptors, G-protein coupled receptors, antigen receptors and integrins. Induces tyrosine phosphorylation of BCAR1 in response to integrin regulation. Activation of BMX by integrins is mediated by PTK2/FAK1, a key mediator of integrin signaling events leading to the regulation of actin cytoskeleton and cell motility. Plays a critical role in TNF-induced angiogenesis, and implicated in the signaling of TEK and FLT1 receptors, 2 important receptor families essential for angiogenesis. Required for the phosphorylation and activation of STAT3, a transcription factor involved in cell differentiation. Also involved in interleukin-6 (IL6) induced differentiation. Also plays a role in programming adaptive cytoprotection against extracellular stress in different cell systems, salivary epithelial cells, brain endothelial cells, and dermal fibroblasts. May be involved in regulation of endocytosis through its interaction with an endosomal protein RUFY1. May also play a role in the growth and differentiation of hematopoietic cells; as well as in signal transduction in endocardial and arterial endothelial cells. The chain is Cytoplasmic tyrosine-protein kinase BMX (BMX) from Homo sapiens (Human).